The following is a 439-amino-acid chain: Capsid vertex component 1 (439 aa).

It belongs to the herpesviridae CVC1 protein family. As to quaternary structure, interacts (via C-terminus) with capsid vertex component 2/CVC2.

Its subcellular location is the virion. The protein localises to the host nucleus. Functionally, capsid vertex-specific component that plays a role during viral DNA encapsidation, assuring correct genome cleavage and presumably stabilizing capsids that contain full-length viral genomes. The polypeptide is Capsid vertex component 1 (Homo sapiens (Human)).